Reading from the N-terminus, the 206-residue chain is Uridine kinase (206 aa).

9-16 (GGSGSGKT) lines the ATP pocket.

The protein belongs to the uridine kinase family. In terms of assembly, monomer.

The protein resides in the cytoplasm. It catalyses the reaction uridine + ATP = UMP + ADP + H(+). It carries out the reaction cytidine + ATP = CMP + ADP + H(+). The protein operates within pyrimidine metabolism; CTP biosynthesis via salvage pathway; CTP from cytidine: step 1/3. Its pathway is pyrimidine metabolism; UMP biosynthesis via salvage pathway; UMP from uridine: step 1/1. In Borreliella burgdorferi (strain ATCC 35210 / DSM 4680 / CIP 102532 / B31) (Borrelia burgdorferi), this protein is Uridine kinase (udk).